The following is a 542-amino-acid chain: Nibrin homolog (542 aa).

Residues 25–90 form the FHA domain; the sequence is YKVGRKGCDI…YGTFVKTDLG (66 aa). Positions 119-195 constitute a BRCT domain; it reads IYRLSLIPLV…KTIILTNWVM (77 aa). A disordered region spans residues 409-430; sequence SRGHMDEKNSSDSVTIRRDRND. The interval 465 to 500 is involved in MRE11-binding; that stretch reads VDFKRFRKGNVTCGNSFSSLIPFAKDPYKEYDSWDV.

Belongs to the Nibrin family. Component of the MRN complex composed of two heterodimers RAD50 and MRE11 associated with a single NBS1.

Its subcellular location is the nucleus. The protein resides in the chromosome. In terms of biological role, component of the MRN complex, which plays a central role in double-strand break (DSB) repair, DNA recombination, maintenance of telomere integrity and meiosis. The MRN complex is involved in the repair of DNA double-strand breaks (DSBs) via homologous recombination (HR), an error-free mechanism which primarily occurs during S and G2 phases. The complex (1) mediates the end resection of damaged DNA, which generates proper single-stranded DNA, a key initial steps in HR, and is (2) required for the recruitment of other repair factors and efficient activation of ATM and ATR upon DNA damage. The MRN complex possesses single-strand endonuclease activity and double-strand-specific 3'-5' exonuclease activity, which are provided by MRE11, to initiate end resection, which is required for single-strand invasion and recombination. Within the MRN complex, NBS1 acts as a protein-protein adapter, which specifically recognizes and binds phosphorylated proteins, promoting their recruitment to DNA damage sites. Recruits MRE11 and RAD50 components of the MRN complex to DSBs in response to DNA damage. This Arabidopsis thaliana (Mouse-ear cress) protein is Nibrin homolog.